The following is a 226-amino-acid chain: Large ribosomal subunit protein uL3 (226 aa).

This sequence belongs to the universal ribosomal protein uL3 family. Part of the 50S ribosomal subunit. Forms a cluster with proteins L14 and L19.

Its function is as follows. One of the primary rRNA binding proteins, it binds directly near the 3'-end of the 23S rRNA, where it nucleates assembly of the 50S subunit. This is Large ribosomal subunit protein uL3 from Sulfurihydrogenibium sp. (strain YO3AOP1).